The following is a 192-amino-acid chain: MLKKTFAALALGTALLSAGQAMAAEYKIDKEGQHAFVDWKISHLGYSFIHGTFKDFDGNFTWDSAKPEASKISVDLKTASLWSNHAERDKHIASADFLDVKKYPEAKFVSTAVKSTGEKTADVTGDLTMHGVTKPVTFKATFNGEGKDPWGGERAGFNATTTLNLNDFGIKGPGATSQTLDLDISVEGVKQK.

The signal sequence occupies residues Met-1 to Ala-23.

This sequence belongs to the UPF0312 family. Type 1 subfamily.

It localises to the periplasm. This is UPF0312 protein PputGB1_5030 from Pseudomonas putida (strain GB-1).